The primary structure comprises 133 residues: ATP synthase epsilon chain (133 aa).

This sequence belongs to the ATPase epsilon chain family. F-type ATPases have 2 components, CF(1) - the catalytic core - and CF(0) - the membrane proton channel. CF(1) has five subunits: alpha(3), beta(3), gamma(1), delta(1), epsilon(1). CF(0) has three main subunits: a, b and c.

It is found in the cell membrane. Produces ATP from ADP in the presence of a proton gradient across the membrane. The sequence is that of ATP synthase epsilon chain (atpC) from Alkalihalophilus pseudofirmus (strain ATCC BAA-2126 / JCM 17055 / OF4) (Bacillus pseudofirmus).